The sequence spans 303 residues: Sporulation regulatory protein (303 aa).

Residues 26–213 (TGRLRAGLRK…HRVNDKQTAE (188 aa)) form the FtsK domain. Residue 43–50 (GANHSGKS) coordinates ATP.

In terms of biological role, involved in sporulation inhibition and pock formation. The polypeptide is Sporulation regulatory protein (spi) (Streptomyces azureus).